A 118-amino-acid polypeptide reads, in one-letter code: DNA-binding protein YG5714_1868 (118 aa).

Belongs to the PDCD5 family.

The protein is DNA-binding protein YG5714_1868 of Saccharolobus islandicus (strain Y.G.57.14 / Yellowstone #1) (Sulfolobus islandicus).